We begin with the raw amino-acid sequence, 301 residues long: Protoheme IX farnesyltransferase (301 aa).

The next 9 membrane-spanning stretches (helical) occupy residues 20-42 (FTEL…GMWL), 55-75 (VDVI…SGAF), 105-125 (ALMV…MTTW), 126-146 (QAGV…SLYA), 150-172 (LVSN…WFAV), 176-198 (FSMV…FYAI), 227-247 (MFFW…LGIV), 249-269 (VILA…GFKM), and 280-300 (FIYS…ISIF).

The protein belongs to the UbiA prenyltransferase family. Protoheme IX farnesyltransferase subfamily. Interacts with CtaA.

It is found in the cell membrane. It carries out the reaction heme b + (2E,6E)-farnesyl diphosphate + H2O = Fe(II)-heme o + diphosphate. It functions in the pathway porphyrin-containing compound metabolism; heme O biosynthesis; heme O from protoheme: step 1/1. In terms of biological role, converts heme B (protoheme IX) to heme O by substitution of the vinyl group on carbon 2 of heme B porphyrin ring with a hydroxyethyl farnesyl side group. The chain is Protoheme IX farnesyltransferase from Listeria welshimeri serovar 6b (strain ATCC 35897 / DSM 20650 / CCUG 15529 / CIP 8149 / NCTC 11857 / SLCC 5334 / V8).